We begin with the raw amino-acid sequence, 886 residues long: MSGVNEIRSTFLDYFAKHGHEVVPSSPLVPRNDPTLMFTNAGMVQFKNVFTGVEKRPYHRAATAQKCVRAGGKHNDLDNVGYTARHHTFFEMLGNFSFGDYFKPLAIELAWNLVTKEFGLDRSKLLVTVYADDDDAATLWRKIAGFPEERIIRIGTSDNFWQMGDTGPCGPCSEIFIDQGPELWGGPPGSPEEDGDRFLEFWNLVFMQYEQIEPGNRVGLPRPSIDTGMGLERMAAILQGVKSNYDTDLFRSLIDAVAHQVGRPPEGAQTASYRVIADHLRAASFLVADGVLPGNEGRGYVLRRIMRRAMRHAQLLGARDPMMYRLVPTLVREMGQAYPELVRAESLISETLRLEETRFRRTLERGLSILDAETRDLSEGQNLSGETAFTLYDTYGFPLDLTQDALKSRGIGVDTDAFKAAMERQRAAARAAWAGSGEAATETLWYALRERVGATEFLGYEAETAEGVVTALVRGGVEVEALASGEEGLLVVSQTPFYGESGGQVGDTGTVAAAGLRARVTDTEKKLGDLFVHHVAVEEGRLTVGQAVELRVDHARRAAIRAHHSATHLLHEALRQVLGDHVAQKGSLVSPERLRFDFSHPKPMNDDEVAAVEEMANRVLLQNGPVVTKLMAVDDAIATGARALFGEKYGDEVRVVSMGEDQGGDGRRRTFSVELCGGTHVGRTGEIGLITVVGEGAVASGVRRIEAMTGDAARRHLAEESRRLAAVAGLLKVPPAEAADRLAALIEDRRRLERELSEARRKLAMGGGGAGEEPVREVAGVKLMARSVEGVEMRDLKSLADEGKKRLGSGVVAIVGVAPDGKAGLVVGVTDDLTDRFDAVALVRAGSERLGGKGGGGRRDMAQAGGPDGAAAQDALAAIEAALAAA.

Zn(2+)-binding residues include histidine 564, histidine 568, cysteine 676, and histidine 680.

It belongs to the class-II aminoacyl-tRNA synthetase family. The cofactor is Zn(2+).

The protein localises to the cytoplasm. It catalyses the reaction tRNA(Ala) + L-alanine + ATP = L-alanyl-tRNA(Ala) + AMP + diphosphate. Its function is as follows. Catalyzes the attachment of alanine to tRNA(Ala) in a two-step reaction: alanine is first activated by ATP to form Ala-AMP and then transferred to the acceptor end of tRNA(Ala). Also edits incorrectly charged Ser-tRNA(Ala) and Gly-tRNA(Ala) via its editing domain. The protein is Alanine--tRNA ligase of Methylobacterium sp. (strain 4-46).